The chain runs to 109 residues: ATPase inhibitor, mitochondrial (109 aa).

A mitochondrion-targeting transit peptide spans 1 to 22; it reads MAGSSSLLRAGIRNVLLMQMRR. The N-terminal inhibitory region stretch occupies residues 27–56; sequence LGELGKGAGKGGGGGGSVREAGGAFGKRQA. The segment at 27–109 is disordered; sequence LGELGKGAGK…KSKIKKLNDD (83 aa). Over residues 30–43 the composition is skewed to gly residues; that stretch reads LGKGAGKGGGGGGS. Composition is skewed to basic and acidic residues over residues 55-69 and 77-98; these read QAAE…KEQE and HHEE…EIER. The stretch at 71 to 109 forms a coiled coil; it reads IASLRKHHEEEIRHHKGEIERLQKEIERHKSKIKKLNDD. The interval 78–109 is antiparallel alpha-helical coiled coil region; it reads HEEEIRHHKGEIERLQKEIERHKSKIKKLNDD. Basic residues predominate over residues 99–109; that stretch reads HKSKIKKLNDD.

It belongs to the ATPase inhibitor family. As to quaternary structure, homodimer; represents the active form and is present at a pH value below 6.5. Homotetramer; represents the inactive form and is present at a pH value above 7.0.

Its subcellular location is the mitochondrion. Functionally, endogenous F(1)F(o)-ATPase inhibitor limiting ATP depletion when the mitochondrial membrane potential falls below a threshold and the F(1)F(o)-ATP synthase starts hydrolyzing ATP to pump protons out of the mitochondrial matrix. Required to avoid the consumption of cellular ATP when the F(1)F(o)-ATP synthase enzyme acts as an ATP hydrolase. Indirectly acts as a regulator of heme synthesis in erythroid tissues: regulates heme synthesis by modulating the mitochondrial pH and redox potential, allowing fech to efficiently catalyze the incorporation of iron into protoporphyrin IX to produce heme. This is ATPase inhibitor, mitochondrial from Xenopus tropicalis (Western clawed frog).